The sequence spans 417 residues: MSLVLKKSIDDVALKDKKVLIRVDFNVPVKNGEITNDFRIRSALPTIQKVLKEGGSCILMSHLGRPKGARMSDPKPEKGVRGYEEAATLRPVAARLSELLEEKVAKAPDCLNASIYVSKLKRGDVLLLENVRFYTEEGSKKEEEADAMAKVLASYADLYVSDAFGTAHRDSATMTGIPKVLGSGYAGYLMEKEINYFSRVLNNPPRPLVAIVGGAKVSDKIELLDNMLGRINYLVIGGAMAYTFQKAQGRKIGISMCEEDKLDLAKSLLKKAQERGVQVLLPVDHVCNKEFKAVDSPLVTEDVDVPDGYMALDIGPKTIHMYEEVIGRCKSAIWNGPMGVFEMPCISKGTFAVAKAMGTGTQKDGLLSIIGGGDTASAAELSARAKNMSHVSTGGGASLELLEGKTLPGVAILTDKQ.

(2R)-3-phosphoglycerate-binding residues include V23, D24, F25, N26, R39, S61, H62, G64, R65, R132, H168, and R169. The ADP site is built by G214 and A215. Residue G214 coordinates CDP. AMP-binding residues include A215 and K216. Residue A215 participates in ATP binding. A215 contributes to the Mg(2+) binding site. K216 lines the (2R)-3-phosphoglycerate pocket. Residue D219 participates in CDP binding. D219 lines the Mg(2+) pocket. 2 residues coordinate ADP: K220 and G238. K220 is an AMP binding site. ATP is bound at residue K220. Residue G238 participates in CDP binding. Residues A239 and A311 each coordinate AMP. The ATP site is built by A239 and A311. ADP is bound by residues A311 and N335. CDP-binding residues include G336 and F341. Positions 341, 342, 374, and 375 each coordinate ADP. An AMP-binding site is contributed by E342. Residues E342, D374, and T375 each coordinate ATP. D374 provides a ligand contact to Mg(2+).

It belongs to the phosphoglycerate kinase family. As to quaternary structure, monomer. Mg(2+) serves as cofactor.

It is found in the cytoplasm. It catalyses the reaction (2R)-3-phosphoglycerate + ATP = (2R)-3-phospho-glyceroyl phosphate + ADP. It participates in carbohydrate degradation; glycolysis; pyruvate from D-glyceraldehyde 3-phosphate: step 2/5. The protein is Phosphoglycerate kinase, cytosolic (PGKB) of Leishmania mexicana.